Reading from the N-terminus, the 238-residue chain is Succinate dehydrogenase iron-sulfur subunit (238 aa).

In terms of domain architecture, 2Fe-2S ferredoxin-type spans 8–97 (YRYNPDVDDA…KIVIRPLPGL (90 aa)). [2Fe-2S] cluster-binding residues include cysteine 55, cysteine 60, and cysteine 75. A 4Fe-4S ferredoxin-type domain is found at 139 to 169 (QREKLDGLYECILCACCSTSCPSFWWNPDKF). Residues cysteine 149, cysteine 152, and cysteine 155 each coordinate [4Fe-4S] cluster. Cysteine 159 lines the [3Fe-4S] cluster pocket. Position 164 (tryptophan 164) interacts with a ubiquinone. [3Fe-4S] cluster is bound by residues cysteine 206 and cysteine 212. A [4Fe-4S] cluster-binding site is contributed by cysteine 216.

Belongs to the succinate dehydrogenase/fumarate reductase iron-sulfur protein family. In terms of assembly, part of an enzyme complex containing four subunits: a flavoprotein, an iron-sulfur, cytochrome b-556, and a hydrophobic anchor protein. The complex forms trimers. [2Fe-2S] cluster serves as cofactor. Requires [3Fe-4S] cluster as cofactor. [4Fe-4S] cluster is required as a cofactor.

The protein resides in the cell inner membrane. It carries out the reaction a quinone + succinate = fumarate + a quinol. It participates in carbohydrate metabolism; tricarboxylic acid cycle; fumarate from succinate (bacterial route): step 1/1. Its function is as follows. Two distinct, membrane-bound, FAD-containing enzymes are responsible for the catalysis of fumarate and succinate interconversion; the fumarate reductase is used in anaerobic growth, and the succinate dehydrogenase is used in aerobic growth. The sequence is that of Succinate dehydrogenase iron-sulfur subunit (sdhB) from Escherichia coli (strain K12).